Reading from the N-terminus, the 601-residue chain is ATP-dependent rRNA helicase SPB4 (601 aa).

The short motif at 14 to 42 (LAWSQASLQPWIHDAIDSLGFRSMTPVQA) is the Q motif element. The 184-residue stretch at 45–228 (IPLFCGNKDV…RTGMSNPVKI (184 aa)) folds into the Helicase ATP-binding domain. 58–65 (AVTGSGKT) serves as a coordination point for ATP. The DEAD box signature appears at 176 to 179 (DEAD). A Helicase C-terminal domain is found at 257–419 (VLINMLSTLQ…AYKAFSKNLR (163 aa)). A coiled-coil region spans residues 507–575 (KEKIRLETME…QIMNESSDEE (69 aa)). The segment covering 532–554 (LKVKNEAWSSKNEKKEGKQERRE) has biased composition (basic and acidic residues). Positions 532–576 (LKVKNEAWSSKNEKKEGKQERREKMKRKREAIEKQIMNESSDEET) are disordered.

This sequence belongs to the DEAD box helicase family. DDX55/SPB4 subfamily. As to quaternary structure, component of pre-60S ribosomal complexes.

It is found in the nucleus. It localises to the nucleolus. The enzyme catalyses ATP + H2O = ADP + phosphate + H(+). ATP-binding RNA helicase involved in the biogenesis of 60S ribosomal subunits. Binds 90S pre-ribosomal particles and dissociates from pre-60S ribosomal particles after processing of 27SB pre-rRNA. Required for the normal formation of 18S rRNA through the processing of pre-rRNAs at sites A0, A1 and A2, and the normal formation of 25S and 5.8S rRNAs through the processing of pre-rRNAs at sites C1 and C2. The sequence is that of ATP-dependent rRNA helicase SPB4 from Meyerozyma guilliermondii (strain ATCC 6260 / CBS 566 / DSM 6381 / JCM 1539 / NBRC 10279 / NRRL Y-324) (Yeast).